Consider the following 64-residue polypeptide: Cytochrome c oxidase subunit 2 (64 aa).

The Mitochondrial intermembrane portion of the chain corresponds to 1–14 (MAHPSQLGFQDAAS). The helical transmembrane segment at 15–45 (PVMEELXHFHDHTLMIVFLISTLVXYIIVAM) threads the bilayer. The Mitochondrial matrix portion of the chain corresponds to 46-64 (VSTKLTNKYVLDSQEIEIV).

The protein belongs to the cytochrome c oxidase subunit 2 family. As to quaternary structure, component of the cytochrome c oxidase (complex IV, CIV), a multisubunit enzyme composed of 14 subunits. The complex is composed of a catalytic core of 3 subunits MT-CO1, MT-CO2 and MT-CO3, encoded in the mitochondrial DNA, and 11 supernumerary subunits COX4I, COX5A, COX5B, COX6A, COX6B, COX6C, COX7A, COX7B, COX7C, COX8 and NDUFA4, which are encoded in the nuclear genome. The complex exists as a monomer or a dimer and forms supercomplexes (SCs) in the inner mitochondrial membrane with NADH-ubiquinone oxidoreductase (complex I, CI) and ubiquinol-cytochrome c oxidoreductase (cytochrome b-c1 complex, complex III, CIII), resulting in different assemblies (supercomplex SCI(1)III(2)IV(1) and megacomplex MCI(2)III(2)IV(2)). Found in a complex with TMEM177, COA6, COX18, COX20, SCO1 and SCO2. Interacts with TMEM177 in a COX20-dependent manner. Interacts with COX20. Interacts with COX16. Cu cation serves as cofactor.

The protein localises to the mitochondrion inner membrane. The enzyme catalyses 4 Fe(II)-[cytochrome c] + O2 + 8 H(+)(in) = 4 Fe(III)-[cytochrome c] + 2 H2O + 4 H(+)(out). Its function is as follows. Component of the cytochrome c oxidase, the last enzyme in the mitochondrial electron transport chain which drives oxidative phosphorylation. The respiratory chain contains 3 multisubunit complexes succinate dehydrogenase (complex II, CII), ubiquinol-cytochrome c oxidoreductase (cytochrome b-c1 complex, complex III, CIII) and cytochrome c oxidase (complex IV, CIV), that cooperate to transfer electrons derived from NADH and succinate to molecular oxygen, creating an electrochemical gradient over the inner membrane that drives transmembrane transport and the ATP synthase. Cytochrome c oxidase is the component of the respiratory chain that catalyzes the reduction of oxygen to water. Electrons originating from reduced cytochrome c in the intermembrane space (IMS) are transferred via the dinuclear copper A center (CU(A)) of subunit 2 and heme A of subunit 1 to the active site in subunit 1, a binuclear center (BNC) formed by heme A3 and copper B (CU(B)). The BNC reduces molecular oxygen to 2 water molecules using 4 electrons from cytochrome c in the IMS and 4 protons from the mitochondrial matrix. The sequence is that of Cytochrome c oxidase subunit 2 (mt-co2) from Scaphirhynchus platorynchus (Shovelnose sturgeon).